The sequence spans 1589 residues: MSATSWFLVSSSGARHRLPRELIFVGREECELMLQSRSVDKQHAVINYDQDRDEHWVKDLGSLNGTFVNDMRIPDQKYVTLKLNDVIRFGYDSNMYVLERVQHRVPEEALKHEKYTSQLQVSVKGLAPKRSEALPEHTPYCEASNPRPEKGDRRPGTEAASYRTPLYGQPSWWGEDDGSTLPDAQRQGEPYPERPKGPVQQDGELHGFRAPAEPQGCSFRREPSYFEIPTKETPQPSQPPEVPAHEMPTKDAEAGGGGAAPVVQSHASFTIEFDDCSPGKMKIKDHITKFSLRQRRPPGKEATPGEMVSAETKVADWLVQNDPSLLHRVGPGDDRHSTKSDLPVHTRTLKGHKHEDGTQSDSEDPLAKAASAAGVPLEASGEQVRLQRQIKRDPQELLHNQQAFVIEFFDEDTPRKKRSQSFTHSPSGDPKADKRRGPTPADRDRPSVPAPVQAGGRSSGPQRAGSLKREKTEERLGSPSPASRTPARPFGSVGRRSRLAQDFMAQCLRESSPAARPSPEKVPPVLPAPLTPHGTSPVGPPTPPPAPTDPQLTKARKQEEDDSLSDAGTYTIETEAQDTEVEEARKMIDQVFGVLESPELSRASSATFRPVIRGDRDESDDGGVAQRMALLQEFASRPLGAAPQAEHQGLPVPGSPGGQKWVSRWASLADSYSDPGLTEDGLGRRGGEPEGSLPVRMRRRLPQLPSERADSPAGPESSRRSGPGPPELDSEQPSRLFGQEELDPDSLSDASGSDGGRGPEPGVEPQDSRRRSPQEGPTWSRGRRSPRAPGEPTPASFFIGDQNGDAVLSRKPLAAPGDGEGLGQTAQPSPPARDGVYVSANGRMVIQLRPGRSPEPDGPAPAFLRQESFTKEPASGPPAPGKPPHISSHPLLQDLAATRAARMDFHSQDTHLILKETETALAALEARLLSNSVDAECEGGSTPRPPEDALSGDSDVDTASTVSLRSGKSGPSPTTPQPLRAQKEMSPSPPAAQDPGGTALVSAREQSSERQHHPLGPTDMGRGEPVRRSAIRRGHRPRGSLDWPSEERGPVLAHLPSSDVMASNHETPEATGAGRLGSRRKPAAPPPSPAAREEQSRSSASSQKGPQALTRSNSLSTPRPTRASRLRRARLGDASDTEAADGERGSLGNPEPVGRPAAEQAKKLSRLDILAMPRKRAGSFTGTSDPEAAPARTSFSGRSVELCCASRKPTMAEARAVSRKAANTATTTGPRQPFSRARSGSARYTSNTRRRQQGSDYTSTSEEEYGSRHGSPKHTRSHTSTATQTPRAGSSSRARSRAPGPRDTDDDEEEPDPYGFIVQTAEIAEIARLSQTLVKDVAILAQEIHDVAGDGDTLGSSEPAHSASLSNMPSTPASTISAREELVQRIPEASLNFQKVPPGSLNSRDFDQNMNDSCEDALANKTRPRNREEVIFDNLMLNPVSQLSQAIRENTEHLAEKMKILFQNTGRAWEDLEARINAENEVPILKTSNKEISSILKELRRVQKQLEVINAIVDPSGSLDLLTGNRSLASSAQPGLGKGRVAAQSPPSPASAEALLPALPLRNFPQRASCGPPSLPDPTFLPDAERFLI.

Positions 23-73 (IFVGREECELMLQSRSVDKQHAVINYDQDRDEHWVKDLGSLNGTFVNDMRI) constitute an FHA domain. Disordered stretches follow at residues 130-261 (RSEA…GAAP), 287-309 (ITKF…EMVS), 325-388 (LLHR…RLQR), and 409-583 (FDED…EVEE). 2 stretches are compositionally biased toward basic and acidic residues: residues 147–156 (RPEKGDRRPG) and 243–253 (PAHEMPTKDAE). The segment covering 330–344 (GPGDDRHSTKSDLPV) has biased composition (basic and acidic residues). Residues serine 360 and serine 421 each carry the phosphoserine modification. Basic and acidic residues-rich tracts occupy residues 430–446 (PKAD…RDRP) and 467–476 (LKREKTEERL). The span at 478 to 489 (SPSPASRTPARP) shows a compositional bias: low complexity. Serine 480 and serine 492 each carry phosphoserine. The segment covering 520 to 530 (EKVPPVLPAPL) has biased composition (pro residues). Serine 536 bears the Phosphoserine mark. Positions 538–548 (VGPPTPPPAPT) are enriched in pro residues. Phosphothreonine is present on threonine 542. Residues serine 597, serine 619, serine 655, serine 711, serine 721, serine 746, serine 748, serine 751, serine 753, serine 772, serine 829, serine 853, serine 954, serine 972, serine 986, and serine 988 each carry the phosphoserine modification. Disordered regions lie at residues 598–895 (PELS…LQDL), 934–1316 (DAEC…PYGF), 1350–1374 (DGDT…TPAS), and 1532–1552 (AQPG…PASA). Residues 711-722 (SPAGPESSRRSG) show a composition bias toward low complexity. The segment covering 957–972 (DTASTVSLRSGKSGPS) has biased composition (polar residues). Residues 1029-1038 (SAIRRGHRPR) show a composition bias toward basic residues. Residues serine 1135, serine 1179, and serine 1199 each carry the phosphoserine modification. The span at 1221–1230 (AANTATTTGP) shows a compositional bias: polar residues. A compositionally biased stretch (low complexity) spans 1286–1301 (PRAGSSSRARSRAPGP). A Phosphothreonine modification is found at threonine 1304. A phosphoserine mark is found at serine 1356 and serine 1362. A compositionally biased stretch (polar residues) spans 1363-1374 (ASLSNMPSTPAS). Positions 1542 to 1552 (AAQSPPSPASA) are enriched in low complexity. Residues serine 1545 and serine 1548 each carry the phosphoserine modification.

It belongs to the CEP170 family.

It localises to the cytoplasm. It is found in the cytoskeleton. Its function is as follows. Plays a role in microtubule organization. This Homo sapiens (Human) protein is Centrosomal protein of 170 kDa protein B (CEP170B).